A 1226-amino-acid chain; its full sequence is Arf guanine nucleotide exchange factor SYT1 (1226 aa).

Disordered regions lie at residues 17–39 (HSND…DKLR) and 113–158 (RNGQ…RNSK). The segment covering 131–142 (SIEKVPKPDGER) has biased composition (basic and acidic residues). Thr-277 carries the post-translational modification Phosphothreonine. Disordered regions lie at residues 311 to 405 (NSLM…TGMS), 954 to 1022 (STGS…NEDY), and 1178 to 1198 (LEHG…DGID). The span at 349-360 (LSRSRSQSTSFV) shows a compositional bias: polar residues. Residue Ser-369 is modified to Phosphoserine. The segment covering 386–405 (GPTSVYNNKSNANSTITGMS) has biased composition (polar residues). The 216-residue stretch at 405-620 (SRRSSSIVNA…TYFYENVTAK (216 aa)) folds into the SEC7 domain. The 231-residue stretch at 844–1074 (ILQMGAIMNL…DSINLFSAYD (231 aa)) folds into the PH domain. Composition is skewed to low complexity over residues 956–969 (GSHT…SSSA) and 994–1017 (SSVS…SSND).

Its subcellular location is the cytoplasm. With respect to regulation, inhibited by brefeldin A. Guanine nucleotide exchange factor for Arf GTPases, stimulating the nucleotide exchange from the GDP-bound to the GTP-bound form. Catalyzes both the GDP release by and the GTP binding to ARF2. Has no exchange activity on Rab GTPases. Involved in vesicular transport. The chain is Arf guanine nucleotide exchange factor SYT1 (SYT1) from Saccharomyces cerevisiae (strain ATCC 204508 / S288c) (Baker's yeast).